The chain runs to 376 residues: Chorismate synthase (376 aa).

Positions 39 and 45 each coordinate NADP(+). Residues 115–117, glycine 276, 291–295, and arginine 317 contribute to the FMN site; these read RSS and KPIPT.

Belongs to the chorismate synthase family. As to quaternary structure, homotetramer. FMNH2 serves as cofactor.

It catalyses the reaction 5-O-(1-carboxyvinyl)-3-phosphoshikimate = chorismate + phosphate. Its pathway is metabolic intermediate biosynthesis; chorismate biosynthesis; chorismate from D-erythrose 4-phosphate and phosphoenolpyruvate: step 7/7. In terms of biological role, catalyzes the anti-1,4-elimination of the C-3 phosphate and the C-6 proR hydrogen from 5-enolpyruvylshikimate-3-phosphate (EPSP) to yield chorismate, which is the branch point compound that serves as the starting substrate for the three terminal pathways of aromatic amino acid biosynthesis. This reaction introduces a second double bond into the aromatic ring system. The sequence is that of Chorismate synthase from Thermotoga maritima (strain ATCC 43589 / DSM 3109 / JCM 10099 / NBRC 100826 / MSB8).